The sequence spans 250 residues: 5-oxoprolinase subunit A (250 aa).

It belongs to the LamB/PxpA family. As to quaternary structure, forms a complex composed of PxpA, PxpB and PxpC.

It carries out the reaction 5-oxo-L-proline + ATP + 2 H2O = L-glutamate + ADP + phosphate + H(+). Its function is as follows. Catalyzes the cleavage of 5-oxoproline to form L-glutamate coupled to the hydrolysis of ATP to ADP and inorganic phosphate. The sequence is that of 5-oxoprolinase subunit A from Paraburkholderia phymatum (strain DSM 17167 / CIP 108236 / LMG 21445 / STM815) (Burkholderia phymatum).